The sequence spans 233 residues: tRNA (guanine-N(7)-)-methyltransferase (233 aa).

Residues 1–23 form a disordered region; it reads MSPQDRPSRTTEAFFGRRRGKPV. Positions 64, 89, 116, and 138 each coordinate S-adenosyl-L-methionine. The active site involves Asp-138. Residues Lys-142, Asp-174, and 212–215 contribute to the substrate site; that span reads TRYE.

It belongs to the class I-like SAM-binding methyltransferase superfamily. TrmB family.

The enzyme catalyses guanosine(46) in tRNA + S-adenosyl-L-methionine = N(7)-methylguanosine(46) in tRNA + S-adenosyl-L-homocysteine. Its pathway is tRNA modification; N(7)-methylguanine-tRNA biosynthesis. In terms of biological role, catalyzes the formation of N(7)-methylguanine at position 46 (m7G46) in tRNA. The protein is tRNA (guanine-N(7)-)-methyltransferase of Mesorhizobium japonicum (strain LMG 29417 / CECT 9101 / MAFF 303099) (Mesorhizobium loti (strain MAFF 303099)).